Consider the following 278-residue polypeptide: Formamidopyrimidine-DNA glycosylase (278 aa).

The active-site Schiff-base intermediate with DNA is the Pro2. The active-site Proton donor is the Glu3. Lys58 serves as the catalytic Proton donor; for beta-elimination activity. Positions 92 and 111 each coordinate DNA. Residues 239–273 form an FPG-type zinc finger; sequence HVYGKKGVPCERCGTPIEKIKVAQRGTHFCPKCQI. Catalysis depends on Arg263, which acts as the Proton donor; for delta-elimination activity.

This sequence belongs to the FPG family. In terms of assembly, monomer. The cofactor is Zn(2+).

The catalysed reaction is Hydrolysis of DNA containing ring-opened 7-methylguanine residues, releasing 2,6-diamino-4-hydroxy-5-(N-methyl)formamidopyrimidine.. The enzyme catalyses 2'-deoxyribonucleotide-(2'-deoxyribose 5'-phosphate)-2'-deoxyribonucleotide-DNA = a 3'-end 2'-deoxyribonucleotide-(2,3-dehydro-2,3-deoxyribose 5'-phosphate)-DNA + a 5'-end 5'-phospho-2'-deoxyribonucleoside-DNA + H(+). Functionally, involved in base excision repair of DNA damaged by oxidation or by mutagenic agents. Acts as a DNA glycosylase that recognizes and removes damaged bases. Has a preference for oxidized purines, such as 7,8-dihydro-8-oxoguanine (8-oxoG). Has AP (apurinic/apyrimidinic) lyase activity and introduces nicks in the DNA strand. Cleaves the DNA backbone by beta-delta elimination to generate a single-strand break at the site of the removed base with both 3'- and 5'-phosphates. In Latilactobacillus sakei subsp. sakei (strain 23K) (Lactobacillus sakei subsp. sakei), this protein is Formamidopyrimidine-DNA glycosylase.